We begin with the raw amino-acid sequence, 146 residues long: Ribonuclease H (146 aa).

The region spanning 1–142 (MNKIIIYTDG…ADALANLAMD (142 aa)) is the RNase H type-1 domain. Mg(2+) contacts are provided by Asp9, Glu47, Asp70, and Asp134.

The protein belongs to the RNase H family. In terms of assembly, monomer. The cofactor is Mg(2+).

It is found in the cytoplasm. The enzyme catalyses Endonucleolytic cleavage to 5'-phosphomonoester.. Functionally, endonuclease that specifically degrades the RNA of RNA-DNA hybrids. The chain is Ribonuclease H from Ruthia magnifica subsp. Calyptogena magnifica.